The primary structure comprises 428 residues: PGL/p-HBAD biosynthesis glycosyltransferase MRA_2985 (428 aa).

The segment at 1-23 is disordered; it reads MEETSVAGDPGPDAGTSTAPNAA.

It belongs to the UDP-glycosyltransferase family.

Functionally, involved in glycosylation steps downstream of mono-O-methyl-glycosyl-p-hydroxybenzoic acid derivative (p-HBAD I) and 2-O-methyl-rhamnosyl-phenolphthiocerol dimycocerosate (mycoside B) during the p-hydroxybenzoic acid derivatives (p-HBAD) and glycosylated phenolphthiocerol dimycocerosates (PGL) biosynthesis. The chain is PGL/p-HBAD biosynthesis glycosyltransferase MRA_2985 from Mycobacterium tuberculosis (strain ATCC 25177 / H37Ra).